Here is a 187-residue protein sequence, read N- to C-terminus: Casparian strip membrane protein 5 (187 aa).

Over 1-24 the chain is Cytoplasmic; it reads MKSGQAEIVETSKGIQKSGLMSRR. Residues 25-45 form a helical membrane-spanning segment; that stretch reads IAILEFILRIVAFFNTIGSAI. At 46-74 the chain is on the extracellular side; the sequence is LMGTTHETLPFFTQFIRFQAEYNDLPALT. Residues 75–95 form a helical membrane-spanning segment; the sequence is FFVVANAVVSGYLIMSLTLAF. Topologically, residues 96-107 are cytoplasmic; it reads VHIVKRKTQNTR. The helical transmembrane segment at 108-128 threads the bilayer; it reads ILLIVLDVAMLGLLSAGASSA. At 129-161 the chain is on the extracellular side; the sequence is AAIVYLAHNGNNKTNWFAICQQFNSFCERISGS. N140 carries an N-linked (GlcNAc...) asparagine glycan. Residues 162–182 traverse the membrane as a helical segment; the sequence is LIGSFIAVVLLILLILLSAIA. Residues 183–187 lie on the Cytoplasmic side of the membrane; sequence LSRRH.

This sequence belongs to the Casparian strip membrane proteins (CASP) family. In terms of assembly, homodimer and heterodimers.

Its subcellular location is the cell membrane. In terms of biological role, regulates membrane-cell wall junctions and localized cell wall deposition. Required for establishment of the Casparian strip membrane domain (CSD) and the subsequent formation of Casparian strips, a cell wall modification of the root endodermis that determines an apoplastic barrier between the intraorganismal apoplasm and the extraorganismal apoplasm and prevents lateral diffusion. The chain is Casparian strip membrane protein 5 from Arabidopsis lyrata subsp. lyrata (Lyre-leaved rock-cress).